A 367-amino-acid polypeptide reads, in one-letter code: DNA replication and repair protein RecF (367 aa).

ATP is bound at residue 31–38 (GENGSGKT).

This sequence belongs to the RecF family.

The protein localises to the cytoplasm. Functionally, the RecF protein is involved in DNA metabolism; it is required for DNA replication and normal SOS inducibility. RecF binds preferentially to single-stranded, linear DNA. It also seems to bind ATP. This chain is DNA replication and repair protein RecF, found in Saccharophagus degradans (strain 2-40 / ATCC 43961 / DSM 17024).